The chain runs to 194 residues: GTP cyclohydrolase 1 (194 aa).

Positions 83, 86, and 155 each coordinate Zn(2+).

The protein belongs to the GTP cyclohydrolase I family. In terms of assembly, toroid-shaped homodecamer, composed of two pentamers of five dimers.

It catalyses the reaction GTP + H2O = 7,8-dihydroneopterin 3'-triphosphate + formate + H(+). The protein operates within cofactor biosynthesis; 7,8-dihydroneopterin triphosphate biosynthesis; 7,8-dihydroneopterin triphosphate from GTP: step 1/1. This is GTP cyclohydrolase 1 from Streptococcus pyogenes serotype M3 (strain ATCC BAA-595 / MGAS315).